A 185-amino-acid chain; its full sequence is C-phycoerythrin beta chain (185 aa).

(2R,3E)-phycoerythrobilin contacts are provided by cysteine 49 and cysteine 60. Residue asparagine 71 is modified to N4-methylasparagine. Positions 81 and 166 each coordinate (2R,3E)-phycoerythrobilin.

Belongs to the phycobiliprotein family. Heterodimer of an alpha and a beta chain. In terms of processing, contains three covalently linked bilin chromophores.

Its subcellular location is the cellular thylakoid membrane. Functionally, light-harvesting photosynthetic bile pigment-protein from the phycobiliprotein complex. In Pseudanabaena tenuis (strain PCC 7409), this protein is C-phycoerythrin beta chain (cpeB).